The following is an 85-amino-acid chain: UPF0291 protein SpyM3_1470 (85 aa).

The interval 62-85 (TPEKLRQVQREKGLHGRSLDDPKS) is disordered.

This sequence belongs to the UPF0291 family.

It is found in the cytoplasm. The protein is UPF0291 protein SpyM3_1470 of Streptococcus pyogenes serotype M3 (strain ATCC BAA-595 / MGAS315).